A 198-amino-acid chain; its full sequence is Charged multivesicular body protein 1a (198 aa).

Coiled-coil stretches lie at residues 7–41 and 176–198; these read QLKFTSKQLERLAKKAEKDSKSEQAKVKKALQQKN and GETSARAQEKEDQLSRRLAALRN. The segment at 171-198 is disordered; it reads GASALGETSARAQEKEDQLSRRLAALRN. An MIT-interacting motif motif is present at residues 187–197; that stretch reads DQLSRRLAALR.

This sequence belongs to the SNF7 family. Probable peripherally associated component of the endosomal sorting required for transport complex III (ESCRT-III).

Its subcellular location is the cytoplasm. The protein localises to the endosome membrane. In terms of biological role, probable peripherally associated component of the endosomal sorting required for transport complex III (ESCRT-III) which is involved in multivesicular bodies (MVBs) formation and sorting of endosomal cargo proteins into MVBs. MVBs contain intraluminal vesicles (ILVs) that are generated by invagination and scission from the limiting membrane of the endosome and mostly are delivered to lysosomes enabling degradation of membrane proteins, such as stimulated growth factor receptors, lysosomal enzymes and lipids. This chain is Charged multivesicular body protein 1a (chmp1a), found in Danio rerio (Zebrafish).